Consider the following 504-residue polypeptide: Deoxyguanosinetriphosphate triphosphohydrolase (504 aa).

Residues 66–273 (RLTHSLEVQQ…MEAADDISYC (208 aa)) form the HD domain.

The protein belongs to the dGTPase family. Type 1 subfamily. As to quaternary structure, homotetramer. It depends on Mg(2+) as a cofactor.

It catalyses the reaction dGTP + H2O = 2'-deoxyguanosine + triphosphate + H(+). In terms of biological role, dGTPase preferentially hydrolyzes dGTP over the other canonical NTPs. This chain is Deoxyguanosinetriphosphate triphosphohydrolase, found in Klebsiella pneumoniae subsp. pneumoniae (strain ATCC 700721 / MGH 78578).